Consider the following 279-residue polypeptide: Release factor glutamine methyltransferase (279 aa).

Residues 118 to 122, aspartate 141, and asparagine 182 each bind S-adenosyl-L-methionine; that span reads GTGSG. Substrate is bound at residue 182-185; that stretch reads NPPY.

This sequence belongs to the protein N5-glutamine methyltransferase family. PrmC subfamily.

The catalysed reaction is L-glutaminyl-[peptide chain release factor] + S-adenosyl-L-methionine = N(5)-methyl-L-glutaminyl-[peptide chain release factor] + S-adenosyl-L-homocysteine + H(+). Methylates the class 1 translation termination release factors RF1/PrfA and RF2/PrfB on the glutamine residue of the universally conserved GGQ motif. The sequence is that of Release factor glutamine methyltransferase from Streptococcus pneumoniae (strain ATCC BAA-255 / R6).